We begin with the raw amino-acid sequence, 79 residues long: Small ribosomal subunit protein bS18 (79 aa).

This sequence belongs to the bacterial ribosomal protein bS18 family. Part of the 30S ribosomal subunit. Forms a tight heterodimer with protein bS6.

Functionally, binds as a heterodimer with protein bS6 to the central domain of the 16S rRNA, where it helps stabilize the platform of the 30S subunit. The polypeptide is Small ribosomal subunit protein bS18 (Salinispora arenicola (strain CNS-205)).